The sequence spans 751 residues: Phosphate transporter PHO1 homolog 8 (751 aa).

Residues 1–299 (MKFGKEYVAQ…LRNAAKLYME (299 aa)) form the SPX domain. The Cytoplasmic segment spans residues 1-351 (MKFGKEYVAQ…KVTKEKHRIT (351 aa)). The helical transmembrane segment at 352–372 (FSTGFFVGCTVSLVIALGLFI) threads the bilayer. Over 373–392 (HARNIMGAVGHKLYMETMFP) the chain is Extracellular. Residues 393–413 (LYSLFAFVVLHMIMYASNIYF) form a helical membrane-spanning segment. Topologically, residues 414 to 434 (WKRYRVNYPFIFGFKEGTELG) are cytoplasmic. A helical transmembrane segment spans residues 435-455 (YGHVLLLSFGLGTLALCAVLV). Residues 456 to 473 (NMDMEMDPNTNDYKTITE) are Extracellular-facing. A helical membrane pass occupies residues 474 to 494 (LVPLFVVALVIAISVCPFNIF). Residues 495-623 (YRSSRFFFLM…FSINRGNDWK (129 aa)) are Cytoplasmic-facing. One can recognise an EXS domain in the interval 558–751 (KSSDVYSTFY…NYDEEEDRDS (194 aa)). A helical membrane pass occupies residues 624-644 (IAAWVFSGLATFYGTYWDIVY). Topologically, residues 645-667 (DWGLLHRPSKSWLREKLLVPHKS) are extracellular. The chain crosses the membrane as a helical span at residues 668–688 (VYYVAMVVNVVLRLAWLQTVL). At 689 to 751 (DFNISFLHRE…NYDEEEDRDS (63 aa)) the chain is on the cytoplasmic side.

The protein belongs to the SYG1 (TC 2.A.94) family. As to expression, expressed in root epidermis, leaf hydathodes, trichomes and petioles, stem vascular cylinder, receptacle, stigma apex and pollen grains.

The protein resides in the cell membrane. In terms of biological role, may transport inorganic phosphate (Pi). The polypeptide is Phosphate transporter PHO1 homolog 8 (PHO1-H8) (Arabidopsis thaliana (Mouse-ear cress)).